Consider the following 212-residue polypeptide: Noggin-2 (212 aa).

The signal sequence occupies residues 1–23 (MGSITRALPLLLLLLLCAHGTAS). The segment at 37–56 (LPVPDLIENPDPEHDPREQD) is disordered. The segment covering 47-56 (DPEHDPREQD) has biased composition (basic and acidic residues). Asn84 carries an N-linked (GlcNAc...) asparagine glycan.

The protein belongs to the noggin family. Homodimer; disulfide-linked.

The protein localises to the secreted. Its function is as follows. Inhibitor of bone morphogenetic proteins (BMP) signaling. This Danio rerio (Zebrafish) protein is Noggin-2 (nog2).